A 324-amino-acid polypeptide reads, in one-letter code: Acetyl-coenzyme A carboxylase carboxyl transferase subunit alpha (324 aa).

Positions 37–291 constitute a CoA carboxyltransferase C-terminal domain; that stretch reads ILEEKLENLE…DLMIRKTFEQ (255 aa).

The protein belongs to the AccA family. Acetyl-CoA carboxylase is a heterohexamer composed of biotin carboxyl carrier protein (AccB), biotin carboxylase (AccC) and two subunits each of ACCase subunit alpha (AccA) and ACCase subunit beta (AccD).

It localises to the cytoplasm. The enzyme catalyses N(6)-carboxybiotinyl-L-lysyl-[protein] + acetyl-CoA = N(6)-biotinyl-L-lysyl-[protein] + malonyl-CoA. Its pathway is lipid metabolism; malonyl-CoA biosynthesis; malonyl-CoA from acetyl-CoA: step 1/1. Its function is as follows. Component of the acetyl coenzyme A carboxylase (ACC) complex. First, biotin carboxylase catalyzes the carboxylation of biotin on its carrier protein (BCCP) and then the CO(2) group is transferred by the carboxyltransferase to acetyl-CoA to form malonyl-CoA. This Bacillus cereus (strain B4264) protein is Acetyl-coenzyme A carboxylase carboxyl transferase subunit alpha.